The sequence spans 494 residues: Gabija protein GajB (494 aa).

The UvrD-like helicase ATP-binding domain occupies 1–229; the sequence is MSREQIIKDG…YHLTSNFRCC (229 aa). 17–24 provides a ligand contact to ATP; the sequence is AGAGSGKT.

Belongs to the helicase family. In terms of assembly, homodimer. Interacts with GajA; 2 GajB dimers dock at opposite sides of the GajA complex to form a 4:4 GajA-GajB assembly (GajAB). GajAB interacts with Bacillus phage Phi3T Gad1 protein; this interaction forms a 4:4:8 GajAB-Gad1 complex and leads to GajAB inhibition.

Component of antiviral defense system Gabija type I, composed of GajA and GajB. Expression of Gabija type I in B.subtilis (strain BEST7003) confers resistance to phages phi105, phi29, rho14, SpBeta and SBSphiC. Expression of Gabija type I in E.coli B (strain ATCC 11303) confers resistance to phage T7. May be a helicase or contribute to GajA activation. This is Gabija protein GajB from Bacillus cereus (strain VD045).